The primary structure comprises 221 residues: Thiamine-phosphate synthase (221 aa).

Residues 44–48 (QLRLK) and Asn-80 contribute to the 4-amino-2-methyl-5-(diphosphooxymethyl)pyrimidine site. Mg(2+) contacts are provided by Asp-81 and Asp-100. Thr-119 is a binding site for 4-amino-2-methyl-5-(diphosphooxymethyl)pyrimidine. 2-[(2R,5Z)-2-carboxy-4-methylthiazol-5(2H)-ylidene]ethyl phosphate is bound at residue 146-148 (TTT). Residue Lys-149 coordinates 4-amino-2-methyl-5-(diphosphooxymethyl)pyrimidine. Gly-176 is a 2-[(2R,5Z)-2-carboxy-4-methylthiazol-5(2H)-ylidene]ethyl phosphate binding site.

Belongs to the thiamine-phosphate synthase family. It depends on Mg(2+) as a cofactor.

It carries out the reaction 2-[(2R,5Z)-2-carboxy-4-methylthiazol-5(2H)-ylidene]ethyl phosphate + 4-amino-2-methyl-5-(diphosphooxymethyl)pyrimidine + 2 H(+) = thiamine phosphate + CO2 + diphosphate. The enzyme catalyses 2-(2-carboxy-4-methylthiazol-5-yl)ethyl phosphate + 4-amino-2-methyl-5-(diphosphooxymethyl)pyrimidine + 2 H(+) = thiamine phosphate + CO2 + diphosphate. The catalysed reaction is 4-methyl-5-(2-phosphooxyethyl)-thiazole + 4-amino-2-methyl-5-(diphosphooxymethyl)pyrimidine + H(+) = thiamine phosphate + diphosphate. The protein operates within cofactor biosynthesis; thiamine diphosphate biosynthesis; thiamine phosphate from 4-amino-2-methyl-5-diphosphomethylpyrimidine and 4-methyl-5-(2-phosphoethyl)-thiazole: step 1/1. Functionally, condenses 4-methyl-5-(beta-hydroxyethyl)thiazole monophosphate (THZ-P) and 2-methyl-4-amino-5-hydroxymethyl pyrimidine pyrophosphate (HMP-PP) to form thiamine monophosphate (TMP). In Hyphomonas neptunium (strain ATCC 15444), this protein is Thiamine-phosphate synthase.